The following is a 245-amino-acid chain: Phosphoribosylaminoimidazole-succinocarboxamide synthase (245 aa).

This sequence belongs to the SAICAR synthetase family.

It catalyses the reaction 5-amino-1-(5-phospho-D-ribosyl)imidazole-4-carboxylate + L-aspartate + ATP = (2S)-2-[5-amino-1-(5-phospho-beta-D-ribosyl)imidazole-4-carboxamido]succinate + ADP + phosphate + 2 H(+). It functions in the pathway purine metabolism; IMP biosynthesis via de novo pathway; 5-amino-1-(5-phospho-D-ribosyl)imidazole-4-carboxamide from 5-amino-1-(5-phospho-D-ribosyl)imidazole-4-carboxylate: step 1/2. The polypeptide is Phosphoribosylaminoimidazole-succinocarboxamide synthase (Nostoc punctiforme (strain ATCC 29133 / PCC 73102)).